The following is a 342-amino-acid chain: Probable deoxyhypusine synthase (342 aa).

The Nucleophile role is filled by Lys307.

This sequence belongs to the deoxyhypusine synthase family. It depends on NAD(+) as a cofactor.

It carries out the reaction [eIF5A protein]-L-lysine + spermidine = [eIF5A protein]-deoxyhypusine + propane-1,3-diamine. It functions in the pathway protein modification; eIF5A hypusination. Catalyzes the NAD-dependent oxidative cleavage of spermidine and the subsequent transfer of the butylamine moiety of spermidine to the epsilon-amino group of a specific lysine residue of the eIF-5A precursor protein to form the intermediate deoxyhypusine residue. The chain is Probable deoxyhypusine synthase (dys) from Pyrococcus horikoshii (strain ATCC 700860 / DSM 12428 / JCM 9974 / NBRC 100139 / OT-3).